We begin with the raw amino-acid sequence, 256 residues long: Triosephosphate isomerase (256 aa).

10–12 serves as a coordination point for substrate; the sequence is NWK. The active-site Electrophile is the His97. Glu169 (proton acceptor) is an active-site residue. Residues Gly175, Ser214, and 235 to 236 contribute to the substrate site; that span reads GG.

This sequence belongs to the triosephosphate isomerase family. In terms of assembly, homodimer.

It is found in the cytoplasm. The catalysed reaction is D-glyceraldehyde 3-phosphate = dihydroxyacetone phosphate. Its pathway is carbohydrate biosynthesis; gluconeogenesis. It functions in the pathway carbohydrate degradation; glycolysis; D-glyceraldehyde 3-phosphate from glycerone phosphate: step 1/1. Functionally, involved in the gluconeogenesis. Catalyzes stereospecifically the conversion of dihydroxyacetone phosphate (DHAP) to D-glyceraldehyde-3-phosphate (G3P). In Actinobacillus pleuropneumoniae serotype 7 (strain AP76), this protein is Triosephosphate isomerase.